Consider the following 367-residue polypeptide: Phosphoribosylaminoimidazole-succinocarboxamide synthase (367 aa).

It belongs to the SAICAR synthetase family.

The catalysed reaction is 5-amino-1-(5-phospho-D-ribosyl)imidazole-4-carboxylate + L-aspartate + ATP = (2S)-2-[5-amino-1-(5-phospho-beta-D-ribosyl)imidazole-4-carboxamido]succinate + ADP + phosphate + 2 H(+). Its pathway is purine metabolism; IMP biosynthesis via de novo pathway; 5-amino-1-(5-phospho-D-ribosyl)imidazole-4-carboxamide from 5-amino-1-(5-phospho-D-ribosyl)imidazole-4-carboxylate: step 1/2. This Shewanella sp. (strain W3-18-1) protein is Phosphoribosylaminoimidazole-succinocarboxamide synthase.